A 401-amino-acid chain; its full sequence is MEQLMSLFPAISTLFTQDPVISITRIALIIFGFFLSYFGFKRTLEPLIMVPMGLGMIAINAGVLFLEAGVVGTIHLDPLVSEPSVLVNLMQVNWLQPVYNFTFSNGLIACIVFFGIGAMSDISFILIRPWASIIVALFAEMGTFATLIIGIKMGLLPNEAAAVATIGGADGPMVLFASLILAKDLFVPIAIIAYLYLSLTYAGYPYLIKLLVPKKYRGLEVEMDFPEVSQRSKFVFSVLACMLLCLLLPVASPLILSFFLGIAIKEAQIEPFQNLLETTLTYGSTLFLGLLLGALCEAKTILDPKISLIVVLGITALLISGIGGVLGGWIVYWFSKGKFNPVIGIAGVSCLPTTAKIAQKTVTEENPYAVILPLAMGAGVCGLIVSAIATGVFISTLFLLN.

The next 10 helical transmembrane spans lie at 20–40, 46–66, 70–90, 107–127, 131–151, 173–193, 244–264, 275–295, 306–326, and 380–400; these read VISITRIALIIFGFFLSYFGF, PLIMVPMGLGMIAINAGVLFL, VVGTIHLDPLVSEPSVLVNLM, LIACIVFFGIGAMSDISFILI, ASIIVALFAEMGTFATLIIGI, MVLFASLILAKDLFVPIAIIA, LCLLLPVASPLILSFFLGIAI, LLETTLTYGSTLFLGLLLGAL, ISLIVVLGITALLISGIGGVL, and VCGLIVSAIATGVFISTLFLL.

The protein resides in the cell membrane. The catalysed reaction is N(6)-carboxybiotinyl-L-lysyl-[protein] + n Na(+)(in) + H(+) = N(6)-biotinyl-L-lysyl-[protein] + n Na(+)(out) + CO2. In terms of biological role, beta subunit of the biotin-dependent malonate decarboxylase multienzyme complex (EC 7.2.4.4). Acts as an integral membrane-bound carboxybiotin protein decarboxylase by releasing the carboxyl group of the carboxylated biotin carrier MADF. The free energy of the decarboxylation reaction is used to pump Na(+) out of the cell. The sequence is that of Carboxybiotin decarboxylase (madB) from Malonomonas rubra.